Here is a 352-residue protein sequence, read N- to C-terminus: MVFRIASSPYTHNQRQTSRIMLLVLLAAVPGIAAQLWFFGWGTLVQILLASVSALLAEALVLKLRKQSVAATLKDNSALLTGLLLAVSIPPLAPWWMVVLGTVFAAIIAKQLYGGLGQNPFNPAMIGYVVLLISFPVQMTSWLPPHEIAVNIPGFIDAIQVIFSGHTASGGDMNTLRLGIDGISQATPLDTFKTSVRAGHSVEQIMQYPIYSGILAGAGWQWVNLAWLAGGLWLLWQKAIRWHIPLSFLVTLALCATLGWLFSPETLAAPQIHLLSGATMLGAFFILTDPVTASTTNRGRLIFGALAGLLVWLIRSFGGYPDGVAFAVLLANITVPLIDYYTRPRVYGHRKG.

Helical transmembrane passes span 20–40 (IMLL…WFFG), 42–62 (GTLV…ALVL), 89–109 (IPPL…AIIA), and 123–143 (PAMI…TSWL). Thr-187 is subject to FMN phosphoryl threonine. A run of 5 helical transmembrane segments spans residues 214 to 234 (ILAG…GLWL), 242 to 262 (WHIP…GWLF), 267 to 287 (LAAP…FFIL), 301 to 321 (LIFG…GGYP), and 322 to 342 (DGVA…DYYT).

It belongs to the NqrB/RnfD family. In terms of assembly, the complex is composed of six subunits: RsxA, RsxB, RsxC, RsxD, RsxE and RsxG. FMN serves as cofactor.

It is found in the cell inner membrane. In terms of biological role, part of a membrane-bound complex that couples electron transfer with translocation of ions across the membrane. Required to maintain the reduced state of SoxR. The chain is Ion-translocating oxidoreductase complex subunit D from Escherichia coli (strain ATCC 8739 / DSM 1576 / NBRC 3972 / NCIMB 8545 / WDCM 00012 / Crooks).